Here is a 424-residue protein sequence, read N- to C-terminus: Neurotensin receptor type 1 (424 aa).

Over 1–67 the chain is Extracellular; that stretch reads MHLNSSVQQG…TDIYSKVLVT (67 aa). N-linked (GlcNAc...) asparagine glycosylation is found at Asn-4, Asn-38, and Asn-42. The helical transmembrane segment at 68 to 88 threads the bilayer; the sequence is AVYLALFVVGTVGNSVTAFTL. Topologically, residues 89–102 are cytoplasmic; sequence ARKKSLQSLQSTVH. Residues 103-122 traverse the membrane as a helical segment; sequence YHLGSLALSDLLILLLAMPV. Over 123-142 the chain is Extracellular; the sequence is ELYNFIWVHHPWAFGDAGCR. Cysteines 141 and 224 form a disulfide. Residues 143 to 164 form a helical membrane-spanning segment; the sequence is GYYFLRDACTYATALNVASLSV. Topologically, residues 165–184 are cytoplasmic; the sequence is ERYLAICHPFKAKTLMSRSR. A helical transmembrane segment spans residues 185 to 205; it reads TKKFISAIWLASALLAVPMLF. At 206-234 the chain is on the extracellular side; the sequence is TMGLQNRSADGQHPGGLVCTPTVDTATVK. An N-linked (GlcNAc...) asparagine glycan is attached at Asn-211. The helical transmembrane segment at 235-259 threads the bilayer; it reads VVIQVNTFMSFLFPMLIISILNTVI. The Cytoplasmic segment spans residues 260–308; sequence ANKLTVMVHQAAEQGRGVCTVGTHNSLEHSTFNMSIEPGRVQALRHGVL. Residues 309–330 traverse the membrane as a helical segment; it reads VLRAVVIAFVVCWLPYHVRRLM. The interval 326 to 349 is neurotensin binding; it reads VRRLMFCYISDEQWTTFLFDFYHY. Topologically, residues 331-348 are extracellular; sequence FCYISDEQWTTFLFDFYH. The helical transmembrane segment at 349-369 threads the bilayer; it reads YFYMLTNALFYVSSAINPILY. At 370-424 the chain is on the cytoplasmic side; it reads NLVSANFRQVFLSTLACLCPGWRRRRKKRPTFSRKPNSMSSNHAFSTSATRETLY. Residues Cys-386 and Cys-388 are each lipidated (S-palmitoyl cysteine). The disordered stretch occupies residues 398-424; sequence RPTFSRKPNSMSSNHAFSTSATRETLY. Over residues 403–424 the composition is skewed to polar residues; it reads RKPNSMSSNHAFSTSATRETLY.

It belongs to the G-protein coupled receptor 1 family. Neurotensin receptor subfamily. NTSR1 sub-subfamily. In terms of assembly, interacts (palmitoylated form) with GNA11. In terms of processing, N-glycosylated. Palmitoylated; this is required for normal localization at membrane rafts and normal GNA11-mediated activation of down-stream signaling cascades. The palmitoylation level increases in response to neurotensin treatment.

The protein localises to the cell membrane. The protein resides in the membrane raft. Functionally, G-protein coupled receptor for the tridecapeptide neurotensin (NTS). Signaling is effected via G proteins that activate a phosphatidylinositol-calcium second messenger system. Signaling leads to the activation of downstream MAP kinases and protects cells against apoptosis. The polypeptide is Neurotensin receptor type 1 (Ntsr1) (Mus musculus (Mouse)).